The sequence spans 265 residues: Ribosomal RNA small subunit methyltransferase A (265 aa).

His11, Leu13, Gly38, Glu59, Asp83, and Asn100 together coordinate S-adenosyl-L-methionine.

This sequence belongs to the class I-like SAM-binding methyltransferase superfamily. rRNA adenine N(6)-methyltransferase family. RsmA subfamily.

It is found in the cytoplasm. The catalysed reaction is adenosine(1518)/adenosine(1519) in 16S rRNA + 4 S-adenosyl-L-methionine = N(6)-dimethyladenosine(1518)/N(6)-dimethyladenosine(1519) in 16S rRNA + 4 S-adenosyl-L-homocysteine + 4 H(+). In terms of biological role, specifically dimethylates two adjacent adenosines (A1518 and A1519) in the loop of a conserved hairpin near the 3'-end of 16S rRNA in the 30S particle. May play a critical role in biogenesis of 30S subunits. The protein is Ribosomal RNA small subunit methyltransferase A of Thermosynechococcus vestitus (strain NIES-2133 / IAM M-273 / BP-1).